The chain runs to 357 residues: Leucoanthocyanidin dioxygenase (357 aa).

The region spanning 212 to 311 (LLLQMKINYY…RISWAVFCEP (100 aa)) is the Fe2OG dioxygenase domain. Fe cation contacts are provided by H236, D238, and H292.

Belongs to the iron/ascorbate-dependent oxidoreductase family. Fe cation is required as a cofactor. It depends on L-ascorbate as a cofactor.

It catalyses the reaction a (2R,3S,4S)-leucoanthocyanidin + 2-oxoglutarate + O2 = a 4-H-anthocyanidin with a 3-hydroxy group + succinate + CO2 + 2 H2O. Its pathway is pigment biosynthesis; anthocyanin biosynthesis. Its function is as follows. Oxidation of leucoanthocyanidins into anthocyanidins. The polypeptide is Leucoanthocyanidin dioxygenase (ANS) (Malus domestica (Apple)).